An 82-amino-acid chain; its full sequence is uncharacterized protein (82 aa).

This is an uncharacterized protein from Bacillus subtilis (strain 168).